The chain runs to 302 residues: Tyrosine--tRNA ligase 2 (302 aa).

Tyr-33 contributes to the L-tyrosine binding site. Positions 38 to 47 (PTADSLHLGH) match the 'HIGH' region motif. Tyr-160 and Gln-164 together coordinate L-tyrosine. The short motif at 220-224 (KFGKS) is the 'KMSKS' region element. Lys-223 is a binding site for ATP.

Belongs to the class-I aminoacyl-tRNA synthetase family. TyrS type 1 subfamily. As to quaternary structure, homodimer.

Its subcellular location is the cytoplasm. It catalyses the reaction tRNA(Tyr) + L-tyrosine + ATP = L-tyrosyl-tRNA(Tyr) + AMP + diphosphate + H(+). Its function is as follows. Catalyzes the attachment of tyrosine to tRNA(Tyr) in a two-step reaction: tyrosine is first activated by ATP to form Tyr-AMP and then transferred to the acceptor end of tRNA(Tyr). This Streptococcus thermophilus (strain CNRZ 1066) protein is Tyrosine--tRNA ligase 2 (tyrS2).